The sequence spans 204 residues: Lipid A acyltransferase PagP (204 aa).

The N-terminal stretch at 1–25 (MSYKHLISACIFSSLCLGQVNAVLA) is a signal peptide. Residues histidine 76, aspartate 119, and serine 120 contribute to the active site.

It belongs to the lipid A palmitoyltransferase family. Homodimer.

The protein localises to the cell outer membrane. It catalyses the reaction a lipid A + a 1,2-diacyl-sn-glycero-3-phosphocholine = a hepta-acyl lipid A + a 2-acyl-sn-glycero-3-phosphocholine. The catalysed reaction is a lipid IVA + a 1,2-diacyl-sn-glycero-3-phosphocholine = a lipid IVB + a 2-acyl-sn-glycero-3-phosphocholine. It carries out the reaction a lipid IIA + a 1,2-diacyl-sn-glycero-3-phosphocholine = a lipid IIB + a 2-acyl-sn-glycero-3-phosphocholine. Its function is as follows. Transfers a fatty acid residue from the sn-1 position of a phospholipid to the N-linked hydroxyfatty acid chain on the proximal unit of lipid A or its precursors. The protein is Lipid A acyltransferase PagP of Yersinia enterocolitica serotype O:8 / biotype 1B (strain NCTC 13174 / 8081).